The primary structure comprises 314 residues: Olfactory receptor 52K2 (314 aa).

At Met-1–Ile-27 the chain is on the extracellular side. Residue Asn-5 is glycosylated (N-linked (GlcNAc...) asparagine). Residues Trp-28–Leu-48 traverse the membrane as a helical segment. Over Leu-49 to Ala-56 the chain is Cytoplasmic. The helical transmembrane segment at Leu-57–Ser-77 threads the bilayer. Residues Ser-78–Ala-101 lie on the Extracellular side of the membrane. The cysteines at positions 99 and 191 are disulfide-linked. The chain crosses the membrane as a helical span at residues Gln-102–Phe-122. At Asp-123 to Ser-141 the chain is on the cytoplasmic side. Residues Leu-142–Pro-162 form a helical membrane-spanning segment. At Phe-163–Asn-198 the chain is on the extracellular side. The helical transmembrane segment at Ile-199 to Ser-219 threads the bilayer. Over Tyr-220–Ala-239 the chain is Cytoplasmic. A helical membrane pass occupies residues Phe-240–Ser-260. Residues Ser-261–His-275 are Extracellular-facing. Residues Ile-276–Val-296 traverse the membrane as a helical segment. Topologically, residues Lys-297–Met-314 are cytoplasmic.

The protein belongs to the G-protein coupled receptor 1 family.

It localises to the cell membrane. Functionally, odorant receptor. In Homo sapiens (Human), this protein is Olfactory receptor 52K2 (OR52K2).